We begin with the raw amino-acid sequence, 92 residues long: N(2)-fixation sustaining protein CowN (92 aa).

It belongs to the CowN family.

Its function is as follows. Is required to sustain N(2)-dependent growth in the presence of low levels of carbon monoxide (CO). Probably acts by protecting the N(2) fixation ability of the nitrogenase complex, which is inactivated in the presence of CO. The sequence is that of N(2)-fixation sustaining protein CowN from Rhodopseudomonas palustris (strain BisB18).